A 403-amino-acid polypeptide reads, in one-letter code: MDWWINARIATLDPDAQHAYGLLESHALGVAHGKVEAIVPMSEWDGDASDNITDANGRLITPGLVDCHTHLVYGGDRAAEFEMRLQGVSYADIAKQGGGIISTVRATRAATEKELLQQSEKRLLALLREGVTTVEIKSGYGLDLESELKMLHVARRLGQRYPVNVRTTLLAAHALPPEYAGRSDDYISWICEEALPVAHEQKLADAVDVFCESIAFTPEQCRRVFEAAQKLGLPVKGHMEQLTLSGGSALAAEFNALSVDHVEYLDEASVQAIAASGTVATLLPGAFYFLRETQRPPMELLRKHKVPMALATDLNPGSCPLASMRLMMNMGCTFFGMTPEETLAGVTRHGAKALGMQDRIGHLAPGMAADFIVWDCQHPAQLSYEFGVTGPHQRVFHGEIHNV.

Fe(3+)-binding residues include His68 and His70. Residues His68 and His70 each coordinate Zn(2+). The 4-imidazolone-5-propanoate site is built by Arg77, Tyr140, and His173. Tyr140 contributes to the N-formimidoyl-L-glutamate binding site. Residue His238 coordinates Fe(3+). His238 is a Zn(2+) binding site. Gln241 lines the 4-imidazolone-5-propanoate pocket. Asp313 provides a ligand contact to Fe(3+). A Zn(2+)-binding site is contributed by Asp313. 2 residues coordinate N-formimidoyl-L-glutamate: Asn315 and Gly317. A 4-imidazolone-5-propanoate-binding site is contributed by Ser318.

Belongs to the metallo-dependent hydrolases superfamily. HutI family. Zn(2+) serves as cofactor. It depends on Fe(3+) as a cofactor.

It localises to the cytoplasm. It carries out the reaction 4-imidazolone-5-propanoate + H2O = N-formimidoyl-L-glutamate. Its pathway is amino-acid degradation; L-histidine degradation into L-glutamate; N-formimidoyl-L-glutamate from L-histidine: step 3/3. Catalyzes the hydrolytic cleavage of the carbon-nitrogen bond in imidazolone-5-propanoate to yield N-formimidoyl-L-glutamate. It is the third step in the universal histidine degradation pathway. The polypeptide is Imidazolonepropionase (Hahella chejuensis (strain KCTC 2396)).